Reading from the N-terminus, the 237-residue chain is Apoptosis regulator OPG045 (237 aa).

Belongs to the orthopoxvirus OPG045 family. As to quaternary structure, interacts with host BAK1, BAX and BID.

Its subcellular location is the host mitochondrion outer membrane. It is found in the host cytoplasm. Its function is as follows. Plays a role in the inhibition of host apoptosis. Interacts with host BAX and thereby inhibits its activity. This is Apoptosis regulator OPG045 (OPG045) from Homo sapiens (Human).